Consider the following 187-residue polypeptide: Adenylate kinase (187 aa).

ATP is bound at residue 10–15; that stretch reads GSGKGT. The tract at residues 30 to 59 is NMP; it reads STGDLLRAEVAAGSPLGLKAKEVMARGDLV. Residues Thr-31, Arg-36, 57–59, 85–88, and Gln-92 contribute to the AMP site; these read DLV and GYPR. The tract at residues 126-136 is LID; the sequence is GRAKAEGREDD. Arg-127 is an ATP binding site. Residues Arg-133 and Arg-144 each contribute to the AMP site. Position 172 (Gly-172) interacts with ATP.

The protein belongs to the adenylate kinase family. As to quaternary structure, monomer.

It localises to the cytoplasm. The enzyme catalyses AMP + ATP = 2 ADP. It functions in the pathway purine metabolism; AMP biosynthesis via salvage pathway; AMP from ADP: step 1/1. Catalyzes the reversible transfer of the terminal phosphate group between ATP and AMP. Plays an important role in cellular energy homeostasis and in adenine nucleotide metabolism. The sequence is that of Adenylate kinase from Xanthomonas oryzae pv. oryzae (strain MAFF 311018).